We begin with the raw amino-acid sequence, 499 residues long: Bifunctional purine biosynthesis protein PurH (499 aa).

An MGS-like domain is found at Met-1 to Thr-144.

The protein belongs to the PurH family.

The enzyme catalyses (6R)-10-formyltetrahydrofolate + 5-amino-1-(5-phospho-beta-D-ribosyl)imidazole-4-carboxamide = 5-formamido-1-(5-phospho-D-ribosyl)imidazole-4-carboxamide + (6S)-5,6,7,8-tetrahydrofolate. It catalyses the reaction IMP + H2O = 5-formamido-1-(5-phospho-D-ribosyl)imidazole-4-carboxamide. It functions in the pathway purine metabolism; IMP biosynthesis via de novo pathway; 5-formamido-1-(5-phospho-D-ribosyl)imidazole-4-carboxamide from 5-amino-1-(5-phospho-D-ribosyl)imidazole-4-carboxamide (10-formyl THF route): step 1/1. Its pathway is purine metabolism; IMP biosynthesis via de novo pathway; IMP from 5-formamido-1-(5-phospho-D-ribosyl)imidazole-4-carboxamide: step 1/1. This Clostridium botulinum (strain Langeland / NCTC 10281 / Type F) protein is Bifunctional purine biosynthesis protein PurH.